We begin with the raw amino-acid sequence, 493 residues long: Cytochrome P450 2E1 (493 aa).

298–303 (FAGTET) provides a ligand contact to substrate. Residue Cys-437 participates in heme binding.

It belongs to the cytochrome P450 family. In terms of assembly, interacts with chaperones HSP70 and HSP90; this interaction is required for initial targeting to mitochondria. It depends on heme as a cofactor.

Its subcellular location is the endoplasmic reticulum membrane. The protein resides in the microsome membrane. The protein localises to the mitochondrion inner membrane. It carries out the reaction an organic molecule + reduced [NADPH--hemoprotein reductase] + O2 = an alcohol + oxidized [NADPH--hemoprotein reductase] + H2O + H(+). It catalyses the reaction (5Z,8Z,11Z)-eicosatrienoate + reduced [NADPH--hemoprotein reductase] + O2 = 19-hydroxy-(5Z,8Z,11Z)-eicosatrienoate + oxidized [NADPH--hemoprotein reductase] + H2O + H(+). The catalysed reaction is (5Z,8Z,11Z,14Z,17Z)-eicosapentaenoate + reduced [NADPH--hemoprotein reductase] + O2 = 19-hydroxy-(5Z,8Z,11Z,14Z,17Z)-eicosapentaenoate + oxidized [NADPH--hemoprotein reductase] + H2O + H(+). The enzyme catalyses (4Z,7Z,10Z,13Z,16Z,19Z)-docosahexaenoate + reduced [NADPH--hemoprotein reductase] + O2 = 21-hydroxy-(4Z,7Z,10Z,13Z,16Z,19Z)-docosahexaenoate + oxidized [NADPH--hemoprotein reductase] + H2O + H(+). It carries out the reaction dodecanoate + reduced [NADPH--hemoprotein reductase] + O2 = 11-hydroxydodecanoate + oxidized [NADPH--hemoprotein reductase] + H2O + H(+). It catalyses the reaction tetradecanoate + reduced [NADPH--hemoprotein reductase] + O2 = 13-hydroxytetradecanoate + oxidized [NADPH--hemoprotein reductase] + H2O + H(+). The catalysed reaction is 4-nitrophenol + NADPH + O2 + H(+) = 4-nitrocatechol + NADP(+) + H2O. The protein operates within lipid metabolism; fatty acid metabolism. Its activity is regulated as follows. The omega-1 hydroxylase activity is stimulated by cytochrome b5. Its function is as follows. A cytochrome P450 monooxygenase involved in the metabolism of fatty acids. Mechanistically, uses molecular oxygen inserting one oxygen atom into a substrate, and reducing the second into a water molecule, with two electrons provided by NADPH via cytochrome P450 reductase (NADPH--hemoprotein reductase). Catalyzes the hydroxylation of carbon-hydrogen bonds. Hydroxylates fatty acids specifically at the omega-1 position displaying the highest catalytic activity for saturated fatty acids. May be involved in the oxidative metabolism of xenobiotics. The sequence is that of Cytochrome P450 2E1 (CYP2E1) from Oryctolagus cuniculus (Rabbit).